The primary structure comprises 107 residues: Probable monothiol glutaredoxin 2 (107 aa).

Residues 7 to 107 (FKFIENEIKN…LEKMLKAYTR (101 aa)) form the Glutaredoxin domain. Lys24 lines the glutathione pocket. Cys32 is a [2Fe-2S] cluster binding site. Residues Arg61, Phe73, and 86 to 87 (CD) contribute to the glutathione site.

Belongs to the glutaredoxin family. Monothiol subfamily.

The polypeptide is Probable monothiol glutaredoxin 2 (grxC2) (Rickettsia conorii (strain ATCC VR-613 / Malish 7)).